A 310-amino-acid chain; its full sequence is Vomeronasal type-1 receptor 50 (310 aa).

The Extracellular segment spans residues 1 to 16 (MSKANLLHTDNNMKIT). Residues 17 to 37 (LFSEVSVGISANSILFVVHLC) traverse the membrane as a helical segment. At 38–50 (KLLHENKPKPIDL) the chain is on the cytoplasmic side. A helical transmembrane segment spans residues 51–71 (YIAFFSITQLMLLITMGLIAV). The Extracellular portion of the chain corresponds to 72–93 (DMFMPWGRWDSTTCQSLIYLHR). A disulfide bridge connects residues Cys85 and Cys172. The chain crosses the membrane as a helical span at residues 94-114 (LLRGLTFCATCLLNVLWTITL). Residues 115-134 (SPRSSCLTKFKHKSPHHISG) are Cytoplasmic-facing. A helical membrane pass occupies residues 135-155 (AFLFFCVLYMSFSSHLLVSII). Over 156-193 (ATFNSTSDNFLYVTQSCSILPVSYSRTSILSTMMTMRE) the chain is Extracellular. N-linked (GlcNAc...) asparagine glycosylation is present at Asn159. A helical membrane pass occupies residues 194–214 (AFLIGLMALSSGYVVVLLWRH). Over 215-237 (KKQARHLHSTSLSSKASPEQRAT) the chain is Cytoplasmic. A helical membrane pass occupies residues 238–258 (STIMLLMGFFVVLYILDTVIF). Residues 259–269 (QARLKFKDVST) lie on the Extracellular side of the membrane. Residues 270 to 290 (FFCVKIIISHSYATFSPFVFI) traverse the membrane as a helical segment. Residues 291-310 (CNDKYMIKFVTSMCGRIVNV) lie on the Cytoplasmic side of the membrane.

Belongs to the G-protein coupled receptor 1 family. As to expression, expressed in a subset of sensory neurons located in the apical layer of the vomeronasal organ.

It localises to the cell membrane. Its function is as follows. Putative pheromone receptor implicated in the regulation of social and reproductive behavior. The protein is Vomeronasal type-1 receptor 50 (Vmn1r50) of Mus musculus (Mouse).